We begin with the raw amino-acid sequence, 270 residues long: 2-aminoethanethiol dioxygenase (270 aa).

The segment at 21–48 (FRGSGGGRGASDRDAASGPEAPMQPGFP) is disordered. Histidine 112 and histidine 114 together coordinate Fe cation. The segment at 140–164 (GGQRPRALPPEQQFEPPLQPREREA) is disordered. Residue histidine 193 coordinates Fe cation. Residues 220 to 223 (CHYY) constitute a cross-link (3'-(S-cysteinyl)-tyrosine (Cys-Tyr)).

As to quaternary structure, monomer. Fe cation is required as a cofactor.

It catalyses the reaction cysteamine + O2 = hypotaurine + H(+). The enzyme catalyses N-terminal L-cysteinyl-[protein] + O2 = N-terminal S-hydroxy-S-oxy-L-cysteinyl-[protein] + H(+). Functionally, plays a vital role in regulating thiol metabolism and preserving oxygen homeostasis by oxidizing the sulfur of cysteamine and N-terminal cysteine-containing proteins to their corresponding sulfinic acids using O2 as a cosubstrate. Catalyzes the oxidation of cysteamine (2-aminoethanethiol) to hypotaurine. Catalyzes the oxidation of regulators of G-protein signaling 4 (RGS4) and 5 (RGS5) and interleukin-32 (IL32). This Homo sapiens (Human) protein is 2-aminoethanethiol dioxygenase (ADO).